The chain runs to 316 residues: Vacuolar morphogenesis protein 7 (316 aa).

Positions 1 to 124 (MAANSVGKMS…QDFLQLSKPN (124 aa)) constitute a PX domain. Residues 168 to 186 (RARTKLHKLRERLEQDVQK) adopt a coiled-coil conformation. A t-SNARE coiled-coil homology domain is found at 250-312 (MQMVRDQEQE…QIANKKARHF (63 aa)).

As to quaternary structure, possibly multimeric. Associates with VAM3.

It localises to the vacuole. Functionally, essential for proper morphogenesis of the vacuole. May exist as structural reinforcement on the surface of the vacuolar membrane and be required for maintenance against rupture by osmotic pressure. This Saccharomyces cerevisiae (strain ATCC 204508 / S288c) (Baker's yeast) protein is Vacuolar morphogenesis protein 7 (VAM7).